A 280-amino-acid chain; its full sequence is MQEVISYIQKAVLEISNALKFPDTSYSQNQNFTGDTQLKFDVLSDEIITKTLSQCSSIKAIISEEKDEILTLNERANFIVAYDPLDGSSLMDVNFAIGSIFAIYEEKASAKNLRAALYSMYGARLELVICKDQPKLYRLNANNEFIFIKDLRMNEKGKINATGGTQKFWEEKHAKFIKSLFDEGYRLRYSGAMVSDINQILLKGGGIFSYPATQDAPNGKLRAFFEVFPLAFIIEKAGGKTTNGKNRSLLELEFDKIHATTPCFFGSEYEISKLLKAYNE.

4 residues coordinate Mg(2+): E64, D83, L85, and D86. Substrate-binding positions include 86–89 (DGSS), Y189, and K220. A Mg(2+)-binding site is contributed by E226.

Belongs to the FBPase class 1 family. As to quaternary structure, homotetramer. It depends on Mg(2+) as a cofactor.

The protein localises to the cytoplasm. The enzyme catalyses beta-D-fructose 1,6-bisphosphate + H2O = beta-D-fructose 6-phosphate + phosphate. Its pathway is carbohydrate biosynthesis; gluconeogenesis. The polypeptide is Fructose-1,6-bisphosphatase class 1 (Campylobacter jejuni subsp. jejuni serotype O:2 (strain ATCC 700819 / NCTC 11168)).